The following is a 104-amino-acid chain: Large ribosomal subunit protein uL24 (104 aa).

This sequence belongs to the universal ribosomal protein uL24 family. As to quaternary structure, part of the 50S ribosomal subunit.

One of two assembly initiator proteins, it binds directly to the 5'-end of the 23S rRNA, where it nucleates assembly of the 50S subunit. Functionally, one of the proteins that surrounds the polypeptide exit tunnel on the outside of the subunit. This Methylobacterium radiotolerans (strain ATCC 27329 / DSM 1819 / JCM 2831 / NBRC 15690 / NCIMB 10815 / 0-1) protein is Large ribosomal subunit protein uL24.